The sequence spans 210 residues: Prolactin-2 (210 aa).

The signal sequence occupies residues 1 to 23; that stretch reads MARRSQGTKLHLAVLCLVVSCHA. Cystine bridges form between Cys69-Cys183 and Cys200-Cys210.

Belongs to the somatotropin/prolactin family.

It localises to the secreted. This is Prolactin-2 (prl2) from Oncorhynchus tshawytscha (Chinook salmon).